A 73-amino-acid polypeptide reads, in one-letter code: Conotoxin MaI51 (73 aa).

The signal sequence occupies residues 1-19 (MQKLTILLLVAAVLLSTQA). The propeptide occupies 20 to 41 (LNQEKRPKEMINVLSKGKTNAE). Gln46 is modified (pyrrolidone carboxylic acid). 3 disulfide bridges follow: Cys47-Cys61, Cys54-Cys65, and Cys60-Cys69. An Isoleucine amide modification is found at Ile72.

The protein belongs to the conotoxin O2 superfamily. Expressed by the venom duct.

It localises to the secreted. This chain is Conotoxin MaI51, found in Conus marmoreus (Marble cone).